Consider the following 540-residue polypeptide: Phosphoenolpyruvate carboxykinase (ATP) (540 aa).

A substrate-binding site is contributed by Arg65. Lys87 bears the N6-acetyllysine mark. Residues Tyr207 and Lys213 each contribute to the substrate site. ATP contacts are provided by residues Lys213, His232, and 248–256 (GLSGTGKTT). Residues Lys213 and His232 each contribute to the Mn(2+) site. Asp269 serves as a coordination point for Mn(2+). ATP is bound by residues Glu297, Arg333, 449-450 (RI), and Thr455. Arg333 contacts substrate. Lys523 carries the post-translational modification N6-acetyllysine.

Belongs to the phosphoenolpyruvate carboxykinase (ATP) family. Monomer. Requires Mn(2+) as cofactor.

The protein localises to the cytoplasm. It carries out the reaction oxaloacetate + ATP = phosphoenolpyruvate + ADP + CO2. It functions in the pathway carbohydrate biosynthesis; gluconeogenesis. In terms of biological role, involved in the gluconeogenesis. Catalyzes the conversion of oxaloacetate (OAA) to phosphoenolpyruvate (PEP) through direct phosphoryl transfer between the nucleoside triphosphate and OAA. The polypeptide is Phosphoenolpyruvate carboxykinase (ATP) (Escherichia coli O6:K15:H31 (strain 536 / UPEC)).